We begin with the raw amino-acid sequence, 71 residues long: DNA-directed RNA polymerase subunit epsilon (71 aa).

It belongs to the RNA polymerase subunit epsilon family. In terms of assembly, RNAP is composed of a core of 2 alpha, a beta and a beta' subunit. The core is associated with a delta subunit, and at least one of epsilon or omega. When a sigma factor is associated with the core the holoenzyme is formed, which can initiate transcription.

It carries out the reaction RNA(n) + a ribonucleoside 5'-triphosphate = RNA(n+1) + diphosphate. Its function is as follows. A non-essential component of RNA polymerase (RNAP). The chain is DNA-directed RNA polymerase subunit epsilon from Staphylococcus saprophyticus subsp. saprophyticus (strain ATCC 15305 / DSM 20229 / NCIMB 8711 / NCTC 7292 / S-41).